The chain runs to 367 residues: E3 ubiquitin-protein ligase RGLG3 (367 aa).

The VWFA domain maps to N37–L257. The segment at C323 to R356 adopts an RING-type zinc-finger fold.

In terms of assembly, interacts with UBC30, GRXS17 and GLB3. Binds to and coactivates GAF1/IDD2 and ENY/IDD1. As to expression, widely expressed.

It localises to the cytoplasm. It is found in the nucleus. The enzyme catalyses S-ubiquitinyl-[E2 ubiquitin-conjugating enzyme]-L-cysteine + [acceptor protein]-L-lysine = [E2 ubiquitin-conjugating enzyme]-L-cysteine + N(6)-ubiquitinyl-[acceptor protein]-L-lysine.. In terms of biological role, possesses E3 ubiquitin-protein ligase in vitro. Acts as upstream modulator of jasmonate (JA) signaling in response to various stimuli, such as JA-inhibited root growth, JA-inductive gene expression, coronatine-mediated pathogen susceptibility, wound-stimulated expression of JA-responsive genes and wound-induced JA biosynthesis. Controls fumonisin B1 (FB1)-triggered programmed cell death (PCD) by modulating the JA signaling pathway. May mediate salicylic acid (SA) suppression of JA signaling in FB1-induced responses. May mediate the formation of 'Lys-48'-linked multiubiquitin chains. Mediates the polyubiquitination and subsequent proteasomal degradation of the target protein GRXS17. The protein is E3 ubiquitin-protein ligase RGLG3 of Arabidopsis thaliana (Mouse-ear cress).